Consider the following 251-residue polypeptide: FHA domain-containing protein FHA1 (251 aa).

Residues 32 to 89 (IILGRNSKKSTVDVDLSSLGGGMNISRNHARIFYDFTRRRFSLEVLGKNGCFVEGVLH) enclose the FHA domain. A compositionally biased stretch (acidic residues) spans 163–174 (EYDDEDDDEEED). Residues 163–209 (EYDDEDDDEEEDIRGSGKKTWRDGHEGVYASGEKKREGRSKADREAD) are disordered. Positions 182-206 (TWRDGHEGVYASGEKKREGRSKADR) are enriched in basic and acidic residues.

As to expression, expressed in roots and vascular tissues near the shoot apex in young seedlings.

The protein resides in the nucleus. May play a role in the control of plant organ development. Does not show transactivation activity in yeast. The chain is FHA domain-containing protein FHA1 from Arabidopsis thaliana (Mouse-ear cress).